The primary structure comprises 67 residues: Medusin-PT (67 aa).

Residues methionine 1–cysteine 22 form the signal peptide. Positions glutamate 23–arginine 48 are excised as a propeptide. The disordered stretch occupies residues glutamate 25–glutamate 46. Residues glutamate 31 to arginine 40 show a composition bias toward acidic residues. Leucine 66 carries the leucine amide modification.

It belongs to the frog skin active peptide (FSAP) family. Medusin subfamily. In terms of processing, in the synthetic mutant medusin-PT1a [T58K], the Leu-50 has been modified in a D-amino acid. In medusin-PT1a, there is an increase in antimicrobial activity, and an increase in hemolytic activity. It is more potent against S.aureus and gains activity against MRSA, E.faecalis, E.coli, P.aeruginosa and C.albicans. There is an important increase in both biofilm inhibition and biofilm eradication. As to expression, expressed by the skin glands.

Its subcellular location is the secreted. The protein resides in the target cell membrane. Antimicrobial peptide with activity against Gram-positive bacteria S.epidermidis ATCC 12228 (MIC=50 uM) and S.aureus (MIC=64 ug/ml and MBC=128 ug/ml). Not active against some Gram-positive bacteria (methicillin-resistant S.aureus (MRSA), E.faecalis), Gram-negative bacterium E.coli ATCC 25922 and fungus C.albicans at concentrations up to 100 uM. Can only slightly inhibit the formation of biofilm by S.aureus (minimal biofilm inhibitionconcentration MBIC=512 ug/ml, minimal biofilm eradication concentration MBEC&gt;512 ug/ml). Has an anti-inflammatory effect, since it inhibits the production of the pro-inflammatory cytokines TNF-alpha and IL-1beta. Has high activity of stimulation of insulin release, which may protect the species from being eaten by predators by causing fatal hypoglycemia. Is not cytotoxic to cancer line cells. Shows very low hemolysis on horse erythrocytes and moderate hemolysis on mouse erythrocytes. This Phyllomedusa tarsius (Brownbelly leaf frog) protein is Medusin-PT.